Reading from the N-terminus, the 884-residue chain is Lon protease homolog 2, peroxisomal (884 aa).

A Lon N-terminal domain is found at 12–255 (LAILPFRNKV…KATELVDRHL (244 aa)). The interval 67–101 (SLLSPGVGSDSGEGGSKAPGGSAGESTKQDTKNGK) is disordered. The span at 75–89 (SDSGEGGSKAPGGSA) shows a compositional bias: gly residues. 408–415 (GPPGVGKT) serves as a coordination point for ATP. A Lon proteolytic domain is found at 689-874 (VASPGVSVGL…EEVLDHAFEG (186 aa)). Residues Ser-780 and Lys-823 contribute to the active site. The short motif at 882-884 (SKL) is the Microbody targeting signal element.

The protein belongs to the peptidase S16 family.

It is found in the peroxisome matrix. The catalysed reaction is Hydrolysis of proteins in presence of ATP.. Its function is as follows. ATP-dependent serine protease that mediates the selective degradation of misfolded and unassembled polypeptides in the peroxisomal matrix. Necessary for type 2 peroxisome targeting signal (PTS2)-containing protein processing and facilitates peroxisome matrix protein import. In Oryza sativa subsp. japonica (Rice), this protein is Lon protease homolog 2, peroxisomal.